The chain runs to 705 residues: CAP-Gly domain-containing linker protein 4 (705 aa).

ANK repeat units lie at residues 65–101 (TSVS…NVND), 149–180 (TNMN…DVDA), and 186–215 (NFGT…NPAF). The CAP-Gly 1 domain maps to 303–345 (GTTEFASGQWAGIELDEPEGKNNGSVGKVQYFKCAPKYGIFAP). Disordered stretches follow at residues 391 to 410 (MTSK…PGEE) and 431 to 479 (TSSL…ANNS). Residues 441–452 (PKKQNAISSNKK) show a composition bias toward polar residues. Residues 455–479 (SKSPSLSSRASAGLNSSATSTANNS) show a composition bias toward low complexity. The 43-residue stretch at 505–547 (GTTNFAPGYWYGIELEKPHGKNDGSVGGVQYFSCSPRYGIFAP) folds into the CAP-Gly 2 domain. 2 positions are modified to phosphoserine: Ser557 and Ser609. Residues 644–686 (GPTDFASGIWLGLELRSAKGKNDGSVGDKRYFTCKPNHGVLVR) form the CAP-Gly 3 domain.

This is CAP-Gly domain-containing linker protein 4 (CLIP4) from Homo sapiens (Human).